The sequence spans 463 residues: Cysteine--tRNA ligase (463 aa).

C30 contributes to the Zn(2+) binding site. The 'HIGH' region motif lies at 32 to 42 (MTVYDYCHVGH). The Zn(2+) site is built by C214, H239, and E243. A 'KMSKS' region motif is present at residues 271 to 275 (KMSKS). K274 lines the ATP pocket.

Belongs to the class-I aminoacyl-tRNA synthetase family. As to quaternary structure, monomer. Zn(2+) is required as a cofactor.

The protein resides in the cytoplasm. It carries out the reaction tRNA(Cys) + L-cysteine + ATP = L-cysteinyl-tRNA(Cys) + AMP + diphosphate. This chain is Cysteine--tRNA ligase, found in Ralstonia pickettii (strain 12J).